Here is a 78-residue protein sequence, read N- to C-terminus: Translational regulator CsrA (78 aa).

The protein belongs to the CsrA/RsmA family. In terms of assembly, homodimer; the beta-strands of each monomer intercalate to form a hydrophobic core, while the alpha-helices form wings that extend away from the core.

The protein resides in the cytoplasm. A translational regulator that binds mRNA to regulate translation initiation and/or mRNA stability. Usually binds in the 5'-UTR at or near the Shine-Dalgarno sequence preventing ribosome-binding, thus repressing translation. Its main target seems to be the major flagellin gene, while its function is anatagonized by FliW. The protein is Translational regulator CsrA of Oleidesulfovibrio alaskensis (strain ATCC BAA-1058 / DSM 17464 / G20) (Desulfovibrio alaskensis).